The primary structure comprises 252 residues: 3-deoxy-manno-octulosonate cytidylyltransferase (252 aa).

It belongs to the KdsB family.

It localises to the cytoplasm. The enzyme catalyses 3-deoxy-alpha-D-manno-oct-2-ulosonate + CTP = CMP-3-deoxy-beta-D-manno-octulosonate + diphosphate. It functions in the pathway nucleotide-sugar biosynthesis; CMP-3-deoxy-D-manno-octulosonate biosynthesis; CMP-3-deoxy-D-manno-octulosonate from 3-deoxy-D-manno-octulosonate and CTP: step 1/1. The protein operates within bacterial outer membrane biogenesis; lipopolysaccharide biosynthesis. Its function is as follows. Activates KDO (a required 8-carbon sugar) for incorporation into bacterial lipopolysaccharide in Gram-negative bacteria. The sequence is that of 3-deoxy-manno-octulosonate cytidylyltransferase from Trichlorobacter lovleyi (strain ATCC BAA-1151 / DSM 17278 / SZ) (Geobacter lovleyi).